The following is a 261-amino-acid chain: Putative hydro-lyase VSAL_I1435 (261 aa).

Belongs to the D-glutamate cyclase family.

In Aliivibrio salmonicida (strain LFI1238) (Vibrio salmonicida (strain LFI1238)), this protein is Putative hydro-lyase VSAL_I1435.